Here is a 633-residue protein sequence, read N- to C-terminus: Polypeptide N-acetylgalactosaminyltransferase 3 (633 aa).

At Met-1 to Lys-19 the chain is on the cytoplasmic side. The chain crosses the membrane as a helical; Signal-anchor for type II membrane protein span at residues Phe-20–Met-37. The Lumenal segment spans residues Gln-38–Asp-633. The disordered stretch occupies residues Asp-112–Glu-145. Over residues Ser-134–Glu-145 the composition is skewed to basic and acidic residues. The segment at Leu-184–Arg-293 is catalytic subdomain A. Mn(2+) is bound by residues Asp-277 and His-279. N-linked (GlcNAc...) asparagine glycosylation occurs at Asn-297. Residues Pro-356–Arg-418 are catalytic subdomain B. His-415 is a binding site for Mn(2+). Residue Asn-484 is glycosylated (N-linked (GlcNAc...) asparagine). Residues Val-504–Ser-630 form the Ricin B-type lectin domain. A disulfide bond links Cys-517 and Cys-535. UDP-N-acetyl-alpha-D-galactosamine is bound by residues Asp-519, Glu-522, His-536, and Asn-541. Cystine bridges form between Cys-561-Cys-574 and Cys-605-Cys-618.

Belongs to the glycosyltransferase 2 family. GalNAc-T subfamily. Requires Mn(2+) as cofactor. In terms of tissue distribution, highly expressed in the reproductive tract, principally in the testis and uterus, and to a lesser degree in the cervix with only trace levels in the ovary. Also expressed at high level in sublingual gland, stomach and colon, with more moderate amounts present in the submandibular and parotid gland as well as the kidney.

Its subcellular location is the golgi apparatus. The protein resides in the golgi stack membrane. It carries out the reaction L-seryl-[protein] + UDP-N-acetyl-alpha-D-galactosamine = a 3-O-[N-acetyl-alpha-D-galactosaminyl]-L-seryl-[protein] + UDP + H(+). The catalysed reaction is L-threonyl-[protein] + UDP-N-acetyl-alpha-D-galactosamine = a 3-O-[N-acetyl-alpha-D-galactosaminyl]-L-threonyl-[protein] + UDP + H(+). Its pathway is protein modification; protein glycosylation. Functionally, catalyzes the initial reaction in O-linked oligosaccharide biosynthesis, the transfer of an N-acetyl-D-galactosamine residue to a serine or threonine residue on the protein receptor. Has activity toward HIV envelope glycoprotein gp120. Has activity towards EA2, MUC2 and MUC5. Probably glycosylates fibronectin in vivo. Glycosylates FGF23. This chain is Polypeptide N-acetylgalactosaminyltransferase 3 (Galnt3), found in Mus musculus (Mouse).